We begin with the raw amino-acid sequence, 141 residues long: General odorant-binding protein 57b (141 aa).

An N-terminal signal peptide occupies residues 1 to 22; that stretch reads MFIYRLVFIAPLILLLFSLAKA. 3 cysteine pairs are disulfide-bonded: cysteine 39-cysteine 77, cysteine 73-cysteine 120, and cysteine 111-cysteine 129.

It belongs to the PBP/GOBP family.

Functionally, present in the aqueous fluid surrounding olfactory sensory dendrites and are thought to aid in the capture and transport of hydrophobic odorants into and through this fluid. The chain is General odorant-binding protein 57b from Drosophila melanogaster (Fruit fly).